Consider the following 445-residue polypeptide: MKHFEVNFDGLVGPTHNYAGLSYGNVASQNNAKEASNPKEAAKQGLRKMKALTELGMTQGVLAPQERPDLATLRRLGFTGNDASVLAQAAKQAPAVLAACYSASSMWTANAATVSPSADTQDGRIHFTPANLTNKFHRSLEPEVTGRILRAVFNNDRHFYHHQHLPENDHFGDEGAANHTRLCRAYGESGVELFVYGRSAFDVSQPAPKRYPARQTLEASQAIARLHGLGDESAVFIQQNPDVIDQGVFHNDVIAVGNQNVLFFHQQAFLNTASALAEVRTKFGDGELHFIEVPTAEVSVQDAVKSYLFNTQILTLPSGEMAIIAPTECRDNPAVSAYLTKLVTLGTPIKGVHYMDVKQSMRNGGGPACLRLRVAMNDTELAAVNPACLITDSQFARLDGWVDRHYRDSLALDDLRDPALVMESRTALDELTQILKLGSVYPFQR.

Residues 19 to 28 (AGLSYGNVAS), Asn-110, and 137 to 138 (HR) each bind substrate. Residue Glu-174 is part of the active site. Arg-214 lines the substrate pocket. The active site involves His-250. Substrate contacts are provided by Asp-252 and Asn-363. The active-site Nucleophile is Cys-369.

The protein belongs to the succinylarginine dihydrolase family. Homodimer.

The catalysed reaction is N(2)-succinyl-L-arginine + 2 H2O + 2 H(+) = N(2)-succinyl-L-ornithine + 2 NH4(+) + CO2. It functions in the pathway amino-acid degradation; L-arginine degradation via AST pathway; L-glutamate and succinate from L-arginine: step 2/5. Functionally, catalyzes the hydrolysis of N(2)-succinylarginine into N(2)-succinylornithine, ammonia and CO(2). In Aeromonas hydrophila subsp. hydrophila (strain ATCC 7966 / DSM 30187 / BCRC 13018 / CCUG 14551 / JCM 1027 / KCTC 2358 / NCIMB 9240 / NCTC 8049), this protein is N-succinylarginine dihydrolase.